A 121-amino-acid chain; its full sequence is General odorant-binding protein 72 (121 aa).

Intrachain disulfides connect Cys-45–Cys-101 and Cys-90–Cys-110.

This sequence belongs to the PBP/GOBP family.

It is found in the secreted. Functionally, present in the aqueous fluid surrounding olfactory sensory dendrites and are thought to aid in the capture and transport of hydrophobic odorants into and through this fluid. This chain is General odorant-binding protein 72 (Obp72), found in Anopheles gambiae (African malaria mosquito).